Reading from the N-terminus, the 482-residue chain is Histone deacetylase 1 (482 aa).

Residues 9-321 (RKVCYYYDGD…WTYETAVALD (313 aa)) are histone deacetylase. 2 residues coordinate 1D-myo-inositol 1,4,5,6-tetrakisphosphate: Gly27 and Lys31. Lys74 carries the N6-acetyllysine; alternate modification. Lys74 participates in a covalent cross-link: Glycyl lysine isopeptide (Lys-Gly) (interchain with G-Cter in SUMO2); alternate. The active site involves His141. Zn(2+) is bound by residues Asp176 and His178. N6-acetyllysine is present on Lys220. At Cys261 the chain carries S-nitrosocysteine. Asp264 is a Zn(2+) binding site. Residue Arg270 participates in 1D-myo-inositol 1,4,5,6-tetrakisphosphate binding. At Cys273 the chain carries S-nitrosocysteine. Over residues 390-400 (PEESGDEDEDD) the composition is skewed to acidic residues. The tract at residues 390 to 482 (PEESGDEDED…KGVKEEVKLA (93 aa)) is disordered. Phosphoserine is present on residues Ser393, Ser406, and Ser409. Positions 401–416 (PDKRISICSSDKRIAC) are enriched in basic and acidic residues. Over residues 417–427 (EEEFSDSEEEG) the composition is skewed to acidic residues. Residues Ser421 and Ser423 each carry the phosphoserine; by CK2 modification. Residue Lys432 is modified to N6-methylated lysine; by EHMT2. Lys438 participates in a covalent cross-link: Glycyl lysine isopeptide (Lys-Gly) (interchain with G-Cter in SUMO2). Residues 443–482 (VKTEDEKEKDPEEKKEVTEEEKTKEEKPEAKGVKEEVKLA) show a composition bias toward basic and acidic residues. Residue Lys444 forms a Glycyl lysine isopeptide (Lys-Gly) (interchain with G-Cter in SUMO2); alternate linkage. A Glycyl lysine isopeptide (Lys-Gly) (interchain with G-Cter in SUMO); alternate cross-link involves residue Lys444. Glycyl lysine isopeptide (Lys-Gly) (interchain with G-Cter in SUMO2) cross-links involve residues Lys456, Lys457, and Lys473. Lys476 participates in a covalent cross-link: Glycyl lysine isopeptide (Lys-Gly) (interchain with G-Cter in SUMO2); alternate. A Glycyl lysine isopeptide (Lys-Gly) (interchain with G-Cter in SUMO); alternate cross-link involves residue Lys476. A Glycyl lysine isopeptide (Lys-Gly) (interchain with G-Cter in SUMO2) cross-link involves residue Lys480.

The protein belongs to the histone deacetylase family. HD type 1 subfamily. In terms of assembly, part of the core histone deacetylase (HDAC) complex composed of HDAC1, HDAC2, RBBP4 and RBBP7, the core complex associates with SIN3, SAP18 and SAP30 to form the SIN3 HDAC complex. Component of the nucleosome remodeling and deacetylase (NuRD) repressor complex, composed of core proteins MTA1, MTA2, MTA3, RBBP4, RBBP7, HDAC1, HDAC2, MBD2, MBD3, and peripherally associated proteins CDK2AP1, CDK2AP2, GATAD2A, GATAD2B, CHD3, CHD4 and CHD5. The exact stoichiometry of the NuRD complex is unknown, and some subunits such as MBD2 and MBD3, GATAD2A and GATAD2B, and CHD3, CHD4 and CHD5 define mutually exclusive NuRD complexes. Component of a BHC histone deacetylase complex that contains HDAC1, HDAC2, HMG20B/BRAF35, KDM1A, RCOR1/CoREST and PHF21A/BHC80. The BHC complex may also contain ZMYM2, ZNF217, ZMYM3, GSE1 and GTF2I. Component of a mSin3A corepressor complex that contains SIN3A, SAP130, SUDS3/SAP45, ARID4B/SAP180, HDAC1 and HDAC2. Component of the SIN3B complex, which includes SIN3B, HDAC1, PHF12 and MORF4L1. Found in a trimeric complex with APBB1 and TSHZ3; the interaction between HDAC1 and APBB1 is mediated by TSHZ3. Forms a complex comprising APPL1, RUVBL2, APPL2, CTNNB1 and HDAC2. Component of a RCOR/GFI/KDM1A/HDAC complex. Part of a complex composed of TRIM28, HDAC1, HDAC2 and EHMT2. Part of a complex containing at least CDYL, MIER1, MIER2, HDAC1 and HDAC2. The large PER complex involved in the histone deacetylation is composed of at least HDAC1, PER2, SFPQ and SIN3A. Associates with the 9-1-1 complex; interacts with HUS1. Found in a complex with DNMT3A and HDAC7. Found in a complex with YY1, SIN3A and GON4L. Identified in a histone deacetylase complex that contains DNTTIP1, HDAC1 and MIDEAS; this complex assembles into a tetramer that contains four copies of each protein chain. Found in a complex composed of at least SINHCAF, SIN3A, HDAC1, SAP30, RBBP4, OGT and TET1. Interacts with GFI1; the interaction is direct. Interacts directly with GFI1B. Interacts with TSHZ3 (via N-terminus); the interaction is direct. Interacts with APEX1; the interaction is not dependent on the acetylated status of APEX1. Interacts with BANP. Interacts with BAZ2A/TIP5. Interacts with BCL6. Interacts with BCOR. Interacts with BHLHE40/DEC1. Interacts with BRCC3; this interaction is enhanced in the presence of PWWP2B. Interacts with BRMS1. Interacts with BRMS1L. Interacts with C10orf90/FATS (via its N-terminal); the interaction prevents binding of HDAC1 to CDKN1A/p21 and facilitates the acetylation and stabilization of CDKN1A/p21. Interacts with CBFA2T3. Interacts with CCAR2. Interacts with CDK2AP1. Interacts with CHD3. Interacts with CHD4. Interacts with CHFR. Interacts with CIART. Interacts with CDKN1A/p21. Interacts with CDK5 complexed to CDK5R1 (p25). Interacts with CRY1. Interacts with DAXX. Interacts with DDIT3/CHOP. Interacts with DDX5. Interacts with DHX36; this interaction occurs in a RNA-dependent manner. Interacts with DNMT1. Interacts with DNTTIP1. Interacts with E4F1. Interacts with EP300. Interacts with ERCC6. Interacts with GATAD2A. Interacts with HCFC1. Interacts with HDAC9. Interacts with HUS1. Interacts with INSM1. Interacts with KDM4A. Interacts with KDM5A; this interaction impairs histone deacetylation. Interacts with KDM5B. Interacts with KLF1. Interacts with MBD3L2. Interacts with MIER1. Interacts with NFE4. Interacts with NR4A2/NURR1. Interacts with NR1D2 (via C-terminus). Interacts with NRIP1. Interacts with NSD2. Interacts with PACS2. Interacts with PHB2. Interacts with PPHLN1. Interacts with PRDM6. Interacts with PRDM16. Interacts with PWWP2A in a MTA1-dependent manner. Interacts with PWWP2B. Interacts with RB1. Interacts with RERE. Interacts with SANBR (via the BTB domain). Interacts with SAMSN1. Interacts with SAP30L. Interacts with SETDB1. Interacts with SIN3A. Interacts with SMAD3. Interacts with SMAD4; positively regulated by ZBTB7A. Interacts with SMARCAD1. Interacts with SMARCA4/BRG1. Interacts with SMYD2. Interacts with SMYD4 (via MYND-type zinc finger). Interacts with SP1; the interaction deacetylates SP1 and regulates its transcriptional activity. Interacts with SP3; the interaction deacetylates SP3 and regulates its transcriptional activity. In vitro, C(18) ceramides increase this interaction and the subsequent SP3 deacetylation and SP3-mediated repression of the TERT promoter. Interacts with SPEN/MINT. Interacts with SPHK2. Interacts with SUV39H1. Interacts with TGIF. Interacts with TGIF2. Interacts with TRAF6. Interacts with TRIM28; the interaction recruits HDAC1 to E2F1 and inhibits its acetylation. Interacts with TSC22D3 isoform 1; this interaction affects HDAC1 activity on MYOG promoter and thus inhibits MYOD1 transcriptional activity. Interacts with UHRF1. Interacts with UHRF2. Interacts with ZBTB7A. Interacts with ZMYND8. Interacts with ZMYND15. Interacts with ZNF431. Interacts with ZNF516; this interaction is enhanced in the presence of PWWP2B. Interacts with ZNF541. Interacts with ZNF638. Interacts with ZNHIT1. Interacts with the non-histone region of MACROH2A1. Identified in a complex with HDAC2, KCTD19, DNTTIP1 and ZNF541. Interacts with VRK1. (Microbial infection) Interacts with SV40 large T antigen. The cofactor is Zn(2+). In terms of processing, sumoylated on Lys-444 and Lys-476; which promotes enzymatic activity. Desumoylated by SENP1. Phosphorylation on Ser-421 and Ser-423 promotes enzymatic activity and interactions with NuRD and SIN3 complexes. Phosphorylated by CDK5. Post-translationally, ubiquitinated by CHFR, leading to its degradation by the proteasome. Ubiquitinated by KCTD11, leading to proteasomal degradation. In terms of tissue distribution, ubiquitous, with higher levels in heart, pancreas and testis, and lower levels in kidney and brain.

It is found in the nucleus. The enzyme catalyses N(6)-acetyl-L-lysyl-[histone] + H2O = L-lysyl-[histone] + acetate. It catalyses the reaction N(6)-acetyl-L-lysyl-[protein] + H2O = L-lysyl-[protein] + acetate. The catalysed reaction is N(6)-(2E)-butenoyl-L-lysyl-[protein] + H2O = (2E)-2-butenoate + L-lysyl-[protein]. It carries out the reaction N(6)-[(S)-lactoyl]-L-lysyl-[protein] + H2O = (S)-lactate + L-lysyl-[protein]. Its activity is regulated as follows. Inositol tetraphosphate (1D-myo-inositol 1,4,5,6-tetrakisphosphate) may act as an intermolecular glue between HDAC1 and N-Cor repressor complex components. In terms of biological role, histone deacetylase that catalyzes the deacetylation of lysine residues on the N-terminal part of the core histones (H2A, H2B, H3 and H4). Histone deacetylation gives a tag for epigenetic repression and plays an important role in transcriptional regulation, cell cycle progression and developmental events. Histone deacetylases act via the formation of large multiprotein complexes. Acts as a component of the histone deacetylase NuRD complex which participates in the remodeling of chromatin. As part of the SIN3B complex is recruited downstream of the constitutively active genes transcriptional start sites through interaction with histones and mitigates histone acetylation and RNA polymerase II progression within transcribed regions contributing to the regulation of transcription. Also functions as a deacetylase for non-histone targets, such as NR1D2, RELA, SP1, SP3, STAT3 and TSHZ3. Deacetylates SP proteins, SP1 and SP3, and regulates their function. Component of the BRG1-RB1-HDAC1 complex, which negatively regulates the CREST-mediated transcription in resting neurons. Upon calcium stimulation, HDAC1 is released from the complex and CREBBP is recruited, which facilitates transcriptional activation. Deacetylates TSHZ3 and regulates its transcriptional repressor activity. Deacetylates 'Lys-310' in RELA and thereby inhibits the transcriptional activity of NF-kappa-B. Deacetylates NR1D2 and abrogates the effect of KAT5-mediated relieving of NR1D2 transcription repression activity. Component of a RCOR/GFI/KDM1A/HDAC complex that suppresses, via histone deacetylase (HDAC) recruitment, a number of genes implicated in multilineage blood cell development. Involved in CIART-mediated transcriptional repression of the circadian transcriptional activator: CLOCK-BMAL1 heterodimer. Required for the transcriptional repression of circadian target genes, such as PER1, mediated by the large PER complex or CRY1 through histone deacetylation. In addition to protein deacetylase activity, also has protein-lysine deacylase activity: acts as a protein decrotonylase and delactylase by mediating decrotonylation ((2E)-butenoyl) and delactylation (lactoyl) of histones, respectively. This Homo sapiens (Human) protein is Histone deacetylase 1.